Reading from the N-terminus, the 247-residue chain is Mannose-specific lectin CML-2 (247 aa).

A carbohydrate-binding residues include D87 and G107. A glycan (N-linked (GlcNAc...) asparagine) is linked at N119. Residues E129 and D131 each contribute to the Mn(2+) site. Positions 131 and 133 each coordinate Ca(2+). The a carbohydrate site is built by S138 and N139. Residues N139 and D142 each coordinate Ca(2+). Mn(2+) is bound by residues D142 and H147. Positions 221, 222, and 223 each coordinate a carbohydrate.

Belongs to the leguminous lectin family. As to quaternary structure, homodimer; non-covalently linked. In terms of processing, glycosylated.

Its function is as follows. Mannose-specific lectin. Also binds alpha-methyl-D-mannoside, D-glucose, N-acetyl-D-glucosamine and sucrose but not D-galactose, D-arabinose, D-fructose, D-xylose, lactose or glycoproteins fetiun, PSM and ovalbumin. Shows agglutinating activity towards rabbit erythrocytes. The chain is Mannose-specific lectin CML-2 from Centrolobium microchaete (Canarywood tree).